Consider the following 756-residue polypeptide: Cellulose synthase catalytic subunit [UDP-forming] (756 aa).

A run of 4 helical transmembrane segments spans residues 27 to 47 (ASYIVGALGLCALIAATTVTL), 49 to 69 (NNEQLIVAAVCVVIFFVVGRG), 106 to 126 (GILGVILLMAELYALYMLFLS), and 167 to 187 (LTVLGALGIDWPPDKVNVYIL). The interval 147 to 242 (DWPTVDIFIP…YILILDCDHI (96 aa)) is catalytic subdomain A. Aspartate 189 is an active-site residue. 2 residues coordinate substrate: aspartate 238 and aspartate 240. Residues 319-379 (EAIESIGGFA…GQRMRWARGM (61 aa)) are catalytic subdomain B. Residue aspartate 335 is part of the active site. Transmembrane regions (helical) follow at residues 409-429 (FFFAIPRVIFLASPLAFLFAG), 432-452 (IIAAAPLAVAAYALPHMFHSI), 470-490 (VYETTMALFLVRVTIVTLLFP), 517-537 (NIIFATIMMGGLLIGLFELIV), and 551-571 (LLNCAWALISLIILFAAIAVG). A PilZ domain is found at 576-681 (QVRYNHRVEA…ERDIVRFVFG (106 aa)). The disordered stretch occupies residues 721–756 (NSRPKKKPLALPVERREPTTIHSGQTQEGKISRAAS). Polar residues predominate over residues 740-756 (TIHSGQTQEGKISRAAS).

Belongs to the glycosyltransferase 2 family. Requires Mg(2+) as cofactor.

It localises to the cell inner membrane. The enzyme catalyses [(1-&gt;4)-beta-D-glucosyl](n) + UDP-alpha-D-glucose = [(1-&gt;4)-beta-D-glucosyl](n+1) + UDP + H(+). It participates in glycan metabolism; bacterial cellulose biosynthesis. Its activity is regulated as follows. Activated by bis-(3'-5') cyclic diguanylic acid (c-di-GMP). Catalytic subunit of cellulose synthase. It polymerizes uridine 5'-diphosphate glucose to cellulose. The thick cellulosic mats generated by this enzyme probably provide a specialized protective environment to the bacterium. The chain is Cellulose synthase catalytic subunit [UDP-forming] (bcsA) from Komagataeibacter sucrofermentans (strain ATCC 700178 / DSM 15973 / CECT 7291 / JCM 9730 / LMG 18788 / BPR 2001) (Acetobacter xylinus subsp. sucrofermentans).